Here is a 147-residue protein sequence, read N- to C-terminus: MVHFTPEDKTNITSVWTKVDVEDVGGESLARLLVVYPWTQRFFDSFGNLSSASAVMGNPKVKAHGKKVLTSFGEGVKNMDNLKGTFAKLSELHCDKLHVDPENFRLLGNVLIIVLASRFGKEFTPEVQASWQKLVSGVSSALGHKYH.

One can recognise a Globin domain in the interval 3–147 (HFTPEDKTNI…VSSALGHKYH (145 aa)). Phosphoserine is present on residues Ser-14 and Ser-51. The heme b site is built by His-64 and His-93.

This sequence belongs to the globin family. Red blood cells.

Its function is as follows. Hemoglobin epsilon chain is a beta-type chain found in early embryos. In Didelphis virginiana (North American opossum), this protein is Hemoglobin subunit epsilon-M (HBE1).